A 476-amino-acid polypeptide reads, in one-letter code: Protein transport protein Sec61 subunit alpha (476 aa).

Topologically, residues 2–33 (GIKFLEVIKPFCAVLPEIQKPERKIQFREKVL) are cytoplasmic. Residues 34-53 (WTAITLFIFLVCCQIPLFGI) form a helical membrane-spanning segment. The Lumenal segment spans residues 54–76 (MSSDSADPFYWMRVILASNRGTL). A helical membrane pass occupies residues 77–96 (MELGISPIVTSGLIMQLLAG). Topologically, residues 97 to 117 (AKIIGVGDTPKDRALFNGAQK) are cytoplasmic. A helical membrane pass occupies residues 118–138 (LFGMIITIGQAIVYVMTGMYG). Residues 139–144 (DPSEMG) lie on the Lumenal side of the membrane. Residues 145–165 (AGICLLIIIQLFVAGLIVLLL) form a helical membrane-spanning segment. The Cytoplasmic portion of the chain corresponds to 166–172 (DELLQKG). A helical transmembrane segment spans residues 173-193 (YGLGSGISLFIATNICETIVW). The Lumenal portion of the chain corresponds to 194–240 (KAFSPTTVNTGRGTEFEGAIIALFHLLATRTDKVRALREGFYRQNLP). The chain crosses the membrane as a helical span at residues 241-261 (NLMNLIATVFVFAVVIYFQGF). At 262–288 (RVDLPIKSARYRGQYNTYPIKLFYTSN) the chain is on the cytoplasmic side. A helical membrane pass occupies residues 289 to 309 (IPIILQSALVSNLYVISQMLS). The Lumenal segment spans residues 310–354 (TRFSGNFLVNLLGTWSDATSGGPARAYPVAGLCYYLSPPESFGSV). Residues 355 to 375 (LDDPVHAGIYIVFMLGSCAFF) traverse the membrane as a helical segment. Residues 376-420 (SKTWIEVSGSSAKDVAKQLKEQQMVMRGHRETSMVHELNRYIPTA) lie on the Cytoplasmic side of the membrane. A helical transmembrane segment spans residues 421-441 (AAFGGLCIGGLSVMADFLGAI). Over 442–445 (GSGT) the chain is Lumenal. Residues 446–462 (GILLAVTIIYQYFEIFV) form a helical membrane-spanning segment. Over 463 to 476 (KEQSEVGSMGALLF) the chain is Cytoplasmic.

The protein belongs to the SecY/SEC61-alpha family. As to quaternary structure, the SEC61 channel-forming translocon complex consists of channel-forming core components SEC61A1, SEC61B and SEC61G and different auxiliary components such as SEC62 and SEC63. The SEC61 channel associates with the multi-pass translocon (MPT) complex.

The protein resides in the endoplasmic reticulum membrane. In terms of biological role, component of SEC61 channel-forming translocon complex that mediates transport of signal peptide-containing precursor polypeptides across the endoplasmic reticulum (ER). Forms a ribosome receptor and a gated pore in the ER membrane, both functions required for cotranslational translocation of nascent polypeptides. May cooperate with auxiliary protein SEC62, SEC63 and HSPA5/BiP to enable post-translational transport of small presecretory proteins. The SEC61 channel is also involved in ER membrane insertion of transmembrane proteins: it mediates membrane insertion of the first few transmembrane segments of proteins, while insertion of subsequent transmembrane regions of multi-pass membrane proteins is mediated by the multi-pass translocon (MPT) complex. The polypeptide is Protein transport protein Sec61 subunit alpha (sec61a) (Hemitripterus americanus (Sea raven)).